We begin with the raw amino-acid sequence, 215 residues long: Histidine biosynthesis bifunctional protein HisIE (215 aa).

The segment at 1–118 (MTKSISIEHL…YKNDVALLQI (118 aa)) is phosphoribosyl-AMP cyclohydrolase. The phosphoribosyl-ATP pyrophosphohydrolase stretch occupies residues 119 to 215 (IPQVSAKIKE…HVEKEGQQRE (97 aa)).

In the N-terminal section; belongs to the PRA-CH family. This sequence in the C-terminal section; belongs to the PRA-PH family.

The protein localises to the cytoplasm. The enzyme catalyses 1-(5-phospho-beta-D-ribosyl)-ATP + H2O = 1-(5-phospho-beta-D-ribosyl)-5'-AMP + diphosphate + H(+). The catalysed reaction is 1-(5-phospho-beta-D-ribosyl)-5'-AMP + H2O = 1-(5-phospho-beta-D-ribosyl)-5-[(5-phospho-beta-D-ribosylamino)methylideneamino]imidazole-4-carboxamide. The protein operates within amino-acid biosynthesis; L-histidine biosynthesis; L-histidine from 5-phospho-alpha-D-ribose 1-diphosphate: step 2/9. Its pathway is amino-acid biosynthesis; L-histidine biosynthesis; L-histidine from 5-phospho-alpha-D-ribose 1-diphosphate: step 3/9. This Oceanobacillus iheyensis (strain DSM 14371 / CIP 107618 / JCM 11309 / KCTC 3954 / HTE831) protein is Histidine biosynthesis bifunctional protein HisIE.